Reading from the N-terminus, the 346-residue chain is Protein RecA (346 aa).

Gly66–Thr73 is an ATP binding site.

Belongs to the RecA family.

The protein resides in the cytoplasm. Can catalyze the hydrolysis of ATP in the presence of single-stranded DNA, the ATP-dependent uptake of single-stranded DNA by duplex DNA, and the ATP-dependent hybridization of homologous single-stranded DNAs. It interacts with LexA causing its activation and leading to its autocatalytic cleavage. In Aromatoleum aromaticum (strain DSM 19018 / LMG 30748 / EbN1) (Azoarcus sp. (strain EbN1)), this protein is Protein RecA.